The primary structure comprises 485 residues: Rhamnulokinase (485 aa).

10–14 contributes to the ATP binding site; that stretch reads ASSGR. Substrate is bound by residues A78 and 233–235; that span reads HDT. The active-site Proton acceptor is D234. T256 lines the ATP pocket. N293 is a substrate binding site. ATP is bound at residue Q301. Residues C351 and C368 are joined by a disulfide bond. ATP is bound at residue G400.

It belongs to the rhamnulokinase family. The cofactor is Mg(2+).

The catalysed reaction is L-rhamnulose + ATP = L-rhamnulose 1-phosphate + ADP + H(+). Its pathway is carbohydrate degradation; L-rhamnose degradation; glycerone phosphate from L-rhamnose: step 2/3. In terms of biological role, involved in the catabolism of L-rhamnose (6-deoxy-L-mannose). Catalyzes the transfer of the gamma-phosphate group from ATP to the 1-hydroxyl group of L-rhamnulose to yield L-rhamnulose 1-phosphate. This Bacillus subtilis (strain 168) protein is Rhamnulokinase.